The chain runs to 2324 residues: MEESSQPAKPLEMNPHSRFIIGSVSEDNSEDETSSLVKLDLLEEKERSLSPVSVCSDSLSDLGLPSAQDGLANHMRPSMSGLHLVKQGRDRKKVDVQRDFTVASPAEFVTRFGGNRVIEKVLIANNGIAAVKCMRSIRRWSYEMFRNERAIRFVVMVTPEDLKANAEYIKMADHYVPVPGGPNNNNYANVELILDIAKRIPVQAVWAGWGHASENPKLPELLHKNGIAFMGPPSQAMWALGDKIASSIVAQTAGIPTLPWNGSGLRVDWQENDLQKRILNVPQELYEKGYVKDADDGLRAAEEVGYPVMIKASEGGGGKGIRKVNNADDFPNLFRQVQAEVPGSPIFVMRLAKQSRHLEVQILADQYGNAISLFGRDCSVQRRHQKIIEEAPASIATSVVFEHMEQCAVKLAKMVGYVSAGTVEYLYSQDGSFYFLELNPRLQVEHPCTEMVADVNLPAAQLQIAMGIPLHRIKDIRVMYGVSPWGDGSIDFENSAHVPCPRGHVIAARITSENPDEGFKPSSGTVQELNFRSNKNVWGYFSVAAAGGLHEFADSQFGHCFSWGENREEAISNMVVALKELSIRGDFRTTVEYLIKLLETESFQQNRIDTGWLDRLIAEKVQAERPDTMLGVVCGALHVADVSFRNSVSNFLHSLERGQVLPAHTLLNTVDVELIYEGRKYVLKVTRQSPNSYVVIMNSSCVEVDVHRLSDGGLLLSYDGSSYTTYMKEEVDRYRITIGNKTCVFEKENDPSILRSPSAGKLIQYVVEDGGHVFAGQCFAEIEVMKMVMTLTAGESGCIHYVKRPGAVLDPGCVIAKLQLDDPSRVQQAELHTGTLPQIQSTALRGEKLHRIFHYVLDNLVNVMNGYCLPEPYFSSKVKGWVERLMKTLRDPSLPLLELQDIMTSVSGRIPPNVEKSIKKEMAQYASNITSVLCQFPSQQIANILDSHAATLNRKSEREVFFMNTQSIVQLVQRYRSGIRGHMKAVVMDLLRQYLKVETQFQHGHYDKCVFALREENKSDMNAVLNYIFSHAQVTKKNLLVTMLIDQLCGRDPTLTDELINILTELTQLSKTTNAKVALRARQVLIASHLPSYELRHNQVESIFLSAIDMYGHQFCIENLQKLILSETSIFDVLPNFFYHSNQVVRMAALEVYVRRAYIAYELNSVQHRQLKDNTCVVEFQFMLPTSHPNRMSFSSNLNHYGMVHVASVSDVLLDNSFTPPCQRMGGMVSFRTFEDFVRIFDEVMSCFCDSPPQSPTFPEAGHASLYDEDKAAREEPIHILNVAIKTDGDVDDDGLAAMFREFTQSKKSVLIEHGIRRLTFLVAQKREFPKFFTFRARDKFEEDRIYRHLEPALAFQLELNRMRNFDLTAIPCANHKMHLYLGAAKVEVGTEVTDYRFFVRAIIRHSDLVTKEASFEYLQNEGERLLLEAMDELEVAFNNTNVRTDCNHIFLNFVPTVIMDPSKIEESVRSMVMRYGSRLWKLRVLQAELKINIRLTPTGKAIPIRLFLTNESGYYLDISLYKEVTDSRTGQIMFQAYGDKQGPLHGMLINTPYVTKDLLQSKRFQAQSLGTSYVYDIPEMFRQSLIKLWDSMNEHAFLPTPPLPSDILTYTELVLDDQGQLVHMNRLPGGNEIGMVAWKMTLKTPEYPEGRDIIVIGNDITYRIGSFGPQEDVLFLRASELARTHGIPRIYVAANSGARIGLAEEIRHMFHVAWEDPDDPYKGYKYLYLTPQDYKKVSALNSVHCEHVEDNGESRYKITDIIGKEDGLGIENLRGSGMIAGESSLAYESIITINLVTCRAIGIGAYLVRLGQRTIQVENSHIILTGCGALNKVLGREVYTSNNQLGGIQIMHNNGVTHGTVCDDFEGVYTILLWLSYMPKSVYSPVPILKVKDPIDRTIDFVPTKTPYDPRWMLAGRPNPSQKGQWQSGFFDNGSFLEIMQPWAQTVVVGRARLGGIPVGVVAVETRTVELSIPADPANLDSEAKIIQQAGQVWFPDSAFKTAQAINDFNREGLPLMVFANWRGFSGGMKDMYDQVLKFGAYIVDGLREYRQPVLIYIPPQAELRGGSWAVIDPTINPRHMEMYADRESRGGILEPEGTVEIKFRRKDLVKTMRRVDPVYMRLAERLGTPELSAADRKDLESKLKEREEFLIPIYHQVAMQFADLHDTPGRMQEKGAITDILDWKTSRTFFYWRLRRLLLEDVVKKKIHDANPELTDGQIQAMLRRWFVEVEGTVKAYLWDSNKDLVEWLEKQLMEEEGVRSVVDENIKYISRDYILKQIRSLVQANPEVAMDSIVHMTQHISPTQRAEIVRILSTMDSPSST.

Position 1 is an N-acetylmethionine (M1). Positions 1-34 are disordered; the sequence is MEESSQPAKPLEMNPHSRFIIGSVSEDNSEDETS. 2 positions are modified to phosphoserine: S78 and S80. Residues 117–618 enclose the Biotin carboxylation domain; that stretch reads VIEKVLIANN…DTGWLDRLIA (502 aa). The ATP-grasp domain occupies 275–466; that stretch reads QKRILNVPQE…LPAAQLQIAM (192 aa). Residue 315 to 320 coordinates ATP; that stretch reads GGGGKG. Mn(2+) contacts are provided by E424, E437, and N439. Residue R441 is part of the active site. The region spanning 745-819 is the Biotinyl-binding domain; that stretch reads FEKENDPSIL…DPGCVIAKLQ (75 aa). K786 carries the post-translational modification N6-biotinyllysine. A Phosphoserine modification is found at S1193. A CoA carboxyltransferase N-terminal domain is found at 1553 to 1891; it reads PYVTKDLLQS…SVYSPVPILK (339 aa). A carboxyltransferase region spans residues 1553–2211; it reads PYVTKDLLQS…EDVVKKKIHD (659 aa). R1800, K2104, and R2106 together coordinate CoA. The CoA carboxyltransferase C-terminal domain maps to 1895–2211; that stretch reads PIDRTIDFVP…EDVVKKKIHD (317 aa).

It depends on biotin as a cofactor. Requires Mn(2+) as cofactor.

It localises to the cytoplasm. The enzyme catalyses hydrogencarbonate + acetyl-CoA + ATP = malonyl-CoA + ADP + phosphate + H(+). It carries out the reaction N(6)-biotinyl-L-lysyl-[protein] + hydrogencarbonate + ATP = N(6)-carboxybiotinyl-L-lysyl-[protein] + ADP + phosphate + H(+). It functions in the pathway lipid metabolism; malonyl-CoA biosynthesis; malonyl-CoA from acetyl-CoA: step 1/1. With respect to regulation, by phosphorylation. In terms of biological role, catalyzes the rate-limiting reaction in the biogenesis of long-chain fatty acids. Carries out three functions: biotin carboxyl carrier protein, biotin carboxylase and carboxyltransferase. This is Acetyl-CoA carboxylase (ACAC) from Gallus gallus (Chicken).